The following is a 228-amino-acid chain: Death domain-containing membrane protein NRADD (228 aa).

Residues 1–52 (MLYNVSKGVVYSDTALQGQDGDREGMWVGAGGALAPNTSSLFPPEPPGASSN) are Extracellular-facing. N-linked (GlcNAc...) asparagine glycosylation is found at N4 and N37. A helical; Signal-anchor for type III membrane protein transmembrane segment spans residues 53–73 (IIPVYCALLATVILGLLAYVA). Topologically, residues 74–228 (FKCWRSHKQR…SSPAESSSVV (155 aa)) are cytoplasmic. The segment at 87-122 (AKARTVELGDPDRDQRRGDSNVFVDSPPSLEPCIPS) is disordered. A compositionally biased stretch (basic and acidic residues) spans 90-105 (RTVELGDPDRDQRRGD). The region spanning 143-222 (EEVQRLLMMG…DVVQVLSSPA (80 aa)) is the Death domain.

In terms of assembly, interacts with NGFR. Interacts with NTRK1. Interacts with SORT1. As to expression, detected in lung and testis.

Its subcellular location is the cell membrane. The protein resides in the nucleus. In terms of biological role, modulates NTRK1 signaling. Can activate several intracellular signaling pathways, leading to activation of JUN. Promotes apoptosis. Promotes translocation of SORT1 to the cell membrane, and thereby hinders lysosomal degradation of SOTR1 and promotes its interaction with NGFR. In Mus musculus (Mouse), this protein is Death domain-containing membrane protein NRADD (Nradd).